We begin with the raw amino-acid sequence, 368 residues long: Probable dual-specificity RNA methyltransferase RlmN (368 aa).

The Proton acceptor role is filled by E100. The Radical SAM core domain occupies 106–344 (QHYGLSVCVT…CVVRQEHGTD (239 aa)). A disulfide bridge connects residues C113 and C349. C120, C124, and C127 together coordinate [4Fe-4S] cluster. S-adenosyl-L-methionine-binding positions include 172 to 173 (GE), S204, 227 to 229 (SLH), and N305. C349 serves as the catalytic S-methylcysteine intermediate.

This sequence belongs to the radical SAM superfamily. RlmN family. It depends on [4Fe-4S] cluster as a cofactor.

It is found in the cytoplasm. It carries out the reaction adenosine(2503) in 23S rRNA + 2 reduced [2Fe-2S]-[ferredoxin] + 2 S-adenosyl-L-methionine = 2-methyladenosine(2503) in 23S rRNA + 5'-deoxyadenosine + L-methionine + 2 oxidized [2Fe-2S]-[ferredoxin] + S-adenosyl-L-homocysteine. The enzyme catalyses adenosine(37) in tRNA + 2 reduced [2Fe-2S]-[ferredoxin] + 2 S-adenosyl-L-methionine = 2-methyladenosine(37) in tRNA + 5'-deoxyadenosine + L-methionine + 2 oxidized [2Fe-2S]-[ferredoxin] + S-adenosyl-L-homocysteine. Its function is as follows. Specifically methylates position 2 of adenine 2503 in 23S rRNA and position 2 of adenine 37 in tRNAs. The polypeptide is Probable dual-specificity RNA methyltransferase RlmN (Streptococcus agalactiae serotype Ia (strain ATCC 27591 / A909 / CDC SS700)).